Reading from the N-terminus, the 357-residue chain is 39 kDa FK506-binding nuclear protein (357 aa).

Serine 92 carries the post-translational modification Phosphoserine. Residues 113–251 form a disordered region; it reads KNSKKSEDDE…ASKDPRTITG (139 aa). Positions 120-182 are enriched in acidic residues; that stretch reads DDEDENESGE…QDSDDSEAEE (63 aa). Residues serine 193 and serine 197 each carry the phosphoserine modification. A compositionally biased stretch (basic and acidic residues) spans 222 to 237; that stretch reads EKPEAKKEQPKAKEPA. The 89-residue stretch at 269–357 folds into the PPIase FKBP-type domain; it reads GKRVSVYYIG…VFEVELKAVH (89 aa).

The protein belongs to the FKBP-type PPIase family. Ubiquitously expressed, highest levels in ovary.

It is found in the nucleus. The catalysed reaction is [protein]-peptidylproline (omega=180) = [protein]-peptidylproline (omega=0). PPIases accelerate the folding of proteins. May function in a signal transduction cascade during early development. The sequence is that of 39 kDa FK506-binding nuclear protein from Drosophila melanogaster (Fruit fly).